Here is a 300-residue protein sequence, read N- to C-terminus: Protein p34 (300 aa).

The next 5 helical transmembrane spans lie at 14-34, 39-59, 87-107, 119-139, and 170-190; these read YLSV…WVVT, ILAS…NLVA, SIFF…SLFI, IIMY…TYVI, and LSDY…LYIF.

It belongs to the cation diffusion facilitator (CDF) transporter (TC 2.A.4) family.

The protein localises to the cell membrane. The sequence is that of Protein p34 (p34) from Rickettsia prowazekii (strain Madrid E).